Reading from the N-terminus, the 461-residue chain is Cysteine--tRNA ligase (461 aa).

Cysteine 29 is a binding site for Zn(2+). The 'HIGH' region signature appears at methionine 31 to histidine 41. Residues cysteine 210, histidine 235, and glutamate 239 each coordinate Zn(2+). Residues lysine 267–serine 271 carry the 'KMSKS' region motif. Lysine 270 is an ATP binding site.

This sequence belongs to the class-I aminoacyl-tRNA synthetase family. In terms of assembly, monomer. Zn(2+) is required as a cofactor.

The protein localises to the cytoplasm. It catalyses the reaction tRNA(Cys) + L-cysteine + ATP = L-cysteinyl-tRNA(Cys) + AMP + diphosphate. The sequence is that of Cysteine--tRNA ligase from Stutzerimonas stutzeri (strain A1501) (Pseudomonas stutzeri).